The primary structure comprises 132 residues: Ribosome-binding factor A (132 aa).

It belongs to the RbfA family. As to quaternary structure, monomer. Binds 30S ribosomal subunits, but not 50S ribosomal subunits or 70S ribosomes.

Its subcellular location is the cytoplasm. In terms of biological role, one of several proteins that assist in the late maturation steps of the functional core of the 30S ribosomal subunit. Associates with free 30S ribosomal subunits (but not with 30S subunits that are part of 70S ribosomes or polysomes). Required for efficient processing of 16S rRNA. May interact with the 5'-terminal helix region of 16S rRNA. This is Ribosome-binding factor A from Prochlorococcus marinus subsp. pastoris (strain CCMP1986 / NIES-2087 / MED4).